Reading from the N-terminus, the 367-residue chain is Histidinol-phosphate aminotransferase (367 aa).

The residue at position 226 (K226) is an N6-(pyridoxal phosphate)lysine.

The protein belongs to the class-II pyridoxal-phosphate-dependent aminotransferase family. Histidinol-phosphate aminotransferase subfamily. As to quaternary structure, homodimer. Pyridoxal 5'-phosphate serves as cofactor.

The catalysed reaction is L-histidinol phosphate + 2-oxoglutarate = 3-(imidazol-4-yl)-2-oxopropyl phosphate + L-glutamate. Its pathway is amino-acid biosynthesis; L-histidine biosynthesis; L-histidine from 5-phospho-alpha-D-ribose 1-diphosphate: step 7/9. This Wolinella succinogenes (strain ATCC 29543 / DSM 1740 / CCUG 13145 / JCM 31913 / LMG 7466 / NCTC 11488 / FDC 602W) (Vibrio succinogenes) protein is Histidinol-phosphate aminotransferase.